The sequence spans 486 residues: N-succinylglutamate 5-semialdehyde dehydrogenase (486 aa).

220 to 225 (GSSRTG) contributes to the NAD(+) binding site. Catalysis depends on residues Glu-243 and Cys-277.

It belongs to the aldehyde dehydrogenase family. AstD subfamily.

The catalysed reaction is N-succinyl-L-glutamate 5-semialdehyde + NAD(+) + H2O = N-succinyl-L-glutamate + NADH + 2 H(+). It functions in the pathway amino-acid degradation; L-arginine degradation via AST pathway; L-glutamate and succinate from L-arginine: step 4/5. Its function is as follows. Catalyzes the NAD-dependent reduction of succinylglutamate semialdehyde into succinylglutamate. The sequence is that of N-succinylglutamate 5-semialdehyde dehydrogenase from Shewanella baltica (strain OS185).